The following is a 204-amino-acid chain: Guanylate kinase (204 aa).

The Guanylate kinase-like domain occupies 4 to 182; the sequence is GLLYVISAPS…ALNQLRAIVQ (179 aa). 11–18 contacts ATP; sequence APSGAGKT.

The protein belongs to the guanylate kinase family.

The protein localises to the cytoplasm. It carries out the reaction GMP + ATP = GDP + ADP. Functionally, essential for recycling GMP and indirectly, cGMP. The protein is Guanylate kinase of Methylococcus capsulatus (strain ATCC 33009 / NCIMB 11132 / Bath).